A 199-amino-acid polypeptide reads, in one-letter code: Peptidyl-tRNA hydrolase (199 aa).

Residue Tyr25 coordinates tRNA. His30 functions as the Proton acceptor in the catalytic mechanism. Positions 76, 78, and 124 each coordinate tRNA.

It belongs to the PTH family. In terms of assembly, monomer.

It localises to the cytoplasm. The enzyme catalyses an N-acyl-L-alpha-aminoacyl-tRNA + H2O = an N-acyl-L-amino acid + a tRNA + H(+). In terms of biological role, hydrolyzes ribosome-free peptidyl-tRNAs (with 1 or more amino acids incorporated), which drop off the ribosome during protein synthesis, or as a result of ribosome stalling. Its function is as follows. Catalyzes the release of premature peptidyl moieties from peptidyl-tRNA molecules trapped in stalled 50S ribosomal subunits, and thus maintains levels of free tRNAs and 50S ribosomes. In Mycobacterium leprae (strain Br4923), this protein is Peptidyl-tRNA hydrolase.